The sequence spans 73 residues: Salivary thrombin inhibitor XC-42 (73 aa).

Residues 1–23 (MKLQFLFIFIAFCVMLFAQIATA) form the signal peptide.

Interacts with human F2 (thrombin). In terms of tissue distribution, salivary gland (at protein level).

Its subcellular location is the secreted. Its function is as follows. Acts as a competitive inhibitor of host thrombin. The chain is Salivary thrombin inhibitor XC-42 from Xenopsylla cheopis (Oriental rat flea).